A 713-amino-acid chain; its full sequence is Probable glutamate carboxypeptidase VP8 (713 aa).

Residues 1–10 are Cytoplasmic-facing; sequence MPHSVLARLP. The helical; Signal-anchor for type II membrane protein transmembrane segment at 11–31 threads the bilayer; the sequence is PGSVRLVAAFGLLLLVSLLVL. At 32-713 the chain is on the extracellular side; sequence HRRPGRPHVA…PTNFSSLVTP (682 aa). 2 N-linked (GlcNAc...) asparagine glycosylation sites follow: asparagine 66 and asparagine 311. Residues 245 to 539 form a catalytic region; it reads ATSGAERLKF…EIWGLLALRL (295 aa). Zn(2+) is bound by residues histidine 345 and aspartate 355. Glutamate 392 functions as the Nucleophile in the catalytic mechanism. The Zn(2+) site is built by glutamate 393, aspartate 421, and histidine 505. N-linked (GlcNAc...) asparagine glycosylation is found at asparagine 667 and asparagine 706.

The protein belongs to the peptidase M28 family. M28B subfamily. The cofactor is Zn(2+).

It is found in the cell membrane. It carries out the reaction Release of an unsubstituted, C-terminal glutamyl residue, typically from Ac-Asp-Glu or folylpoly-gamma-glutamates.. In terms of biological role, involved in the regulation of meristem development and seed maturation processes. Mediates regulation of embryonic regulatory genes and genes controlling abscisic acid (ABA) biosynthesis and turnover in developing seeds. May be required for the synthesis of small signaling molecules that integrates meristem and embryo formation in seeds. The sequence is that of Probable glutamate carboxypeptidase VP8 from Zea mays (Maize).